Reading from the N-terminus, the 439-residue chain is GTPase Obg (439 aa).

Positions 5-164 constitute an Obg domain; it reads TDFFDQATIV…LTLELELKML (160 aa). The 171-residue stretch at 165-335 folds into the OBG-type G domain; that stretch reads ADVGLVGFPN…LLRRVADLLR (171 aa). GTP is bound by residues 171-178, 196-200, 217-220, 287-290, and 316-318; these read GFPNAGKS, FTTLT, DIPG, NKAD, and SAA. Residues S178 and T198 each coordinate Mg(2+). The 78-residue stretch at 356–433 folds into the OCT domain; it reads LPEVDENAFT…IGRAELVWDD (78 aa).

This sequence belongs to the TRAFAC class OBG-HflX-like GTPase superfamily. OBG GTPase family. As to quaternary structure, monomer. It depends on Mg(2+) as a cofactor.

Its subcellular location is the cytoplasm. Functionally, an essential GTPase which binds GTP, GDP and possibly (p)ppGpp with moderate affinity, with high nucleotide exchange rates and a fairly low GTP hydrolysis rate. Plays a role in control of the cell cycle, stress response, ribosome biogenesis and in those bacteria that undergo differentiation, in morphogenesis control. This is GTPase Obg from Chloroflexus aurantiacus (strain ATCC 29364 / DSM 637 / Y-400-fl).